A 192-amino-acid chain; its full sequence is 7-methyl-GTP pyrophosphatase (192 aa).

The active-site Proton acceptor is aspartate 69.

The protein belongs to the Maf family. YceF subfamily. The cofactor is a divalent metal cation.

Its subcellular location is the cytoplasm. It carries out the reaction N(7)-methyl-GTP + H2O = N(7)-methyl-GMP + diphosphate + H(+). Functionally, nucleoside triphosphate pyrophosphatase that hydrolyzes 7-methyl-GTP (m(7)GTP). May have a dual role in cell division arrest and in preventing the incorporation of modified nucleotides into cellular nucleic acids. The polypeptide is 7-methyl-GTP pyrophosphatase (Methylobacillus flagellatus (strain ATCC 51484 / DSM 6875 / VKM B-1610 / KT)).